The following is a 146-amino-acid chain: Large ribosomal subunit protein bL21 (146 aa).

A disordered region spans residues 103-146 (DGKSPTIGPRPKKEKAVEPVEGASDDKPRRAAKKTAAKTAEDAD). Residues 116–131 (EKAVEPVEGASDDKPR) are compositionally biased toward basic and acidic residues.

Belongs to the bacterial ribosomal protein bL21 family. As to quaternary structure, part of the 50S ribosomal subunit. Contacts protein L20.

Functionally, this protein binds to 23S rRNA in the presence of protein L20. The sequence is that of Large ribosomal subunit protein bL21 from Nitrobacter winogradskyi (strain ATCC 25391 / DSM 10237 / CIP 104748 / NCIMB 11846 / Nb-255).